Reading from the N-terminus, the 508-residue chain is Fc receptor-like protein 2 (508 aa).

An N-terminal signal peptide occupies residues 1–19 (MLLWSLLVIFDAVTEQADS). Ig-like C2-type domains follow at residues 20 to 98 (LTLV…SNIV), 109 to 187 (PVLT…HRIR), 201 to 290 (PISN…KVVN), and 300 to 387 (PVLT…VSIS). At 20-401 (LTLVAPSSVF…YRRDLMTAGV (382 aa)) the chain is on the extracellular side. A disulfide bridge connects residues cysteine 128 and cysteine 177. N-linked (GlcNAc...) asparagine glycosylation is found at asparagine 204, asparagine 234, asparagine 343, asparagine 355, and asparagine 365. Cystine bridges form between cysteine 226–cysteine 275 and cysteine 321–cysteine 368. The chain crosses the membrane as a helical span at residues 402–422 (LWGLFGVLGFTGVALLLYALF). The Cytoplasmic segment spans residues 423–508 (HKISGESSAT…QVIYSSVKKS (86 aa)). The interval 429–453 (SSATNEPRGASRPNPQEFTYSSPTP) is disordered. Over residues 441–452 (PNPQEFTYSSPT) the composition is skewed to polar residues. 4 consecutive short sequence motifs (ITIM motif) follow at residues 446–451 (FTYSSP), 460–465 (PVYVNV), 472–477 (VVYSQV), and 500–505 (VIYSSV).

In terms of assembly, the tyrosine-phosphorylated isoform 2 interacts with PTPN6. In terms of processing, isoform 2 is N- and O-glycosylated, and phosphorylated. Expressed in the secondary lymphoid organs, spleen and lymph node. Expression is limited to the mature B-cell lines. Highly expressed in CD19 and within the mantle zones of the tonsil tissue. Isoform 2 is expressed in the spleen, peripheral blood and bone marrow. Isoform 2 and isoform 4 are expressed in B-cell lines. Preferentially expressed in memory B-cells (at protein level).

It localises to the cell membrane. In terms of biological role, may have an regulatory role in normal and neoplastic B cell development. The polypeptide is Fc receptor-like protein 2 (FCRL2) (Homo sapiens (Human)).